We begin with the raw amino-acid sequence, 491 residues long: Ketol-acid reductoisomerase (NADP(+)) (491 aa).

The region spanning 15–208 is the KARI N-terminal Rossmann domain; it reads AQLGKCRFMG…GGHRAGVLES (194 aa). NADP(+) contacts are provided by residues 45-48, Arg-68, Arg-76, Ser-78, and 108-110; these read CGAQ and DKQ. His-132 is a catalytic residue. Position 158 (Gly-158) interacts with NADP(+). 2 consecutive KARI C-terminal knotted domains span residues 209–344 and 345–484; these read SFVA…TAPQ and YEGK…MTDM. Mg(2+) contacts are provided by Asp-217, Glu-221, Glu-389, and Glu-393. Position 414 (Ser-414) interacts with substrate.

Belongs to the ketol-acid reductoisomerase family. Mg(2+) serves as cofactor.

The enzyme catalyses (2R)-2,3-dihydroxy-3-methylbutanoate + NADP(+) = (2S)-2-acetolactate + NADPH + H(+). The catalysed reaction is (2R,3R)-2,3-dihydroxy-3-methylpentanoate + NADP(+) = (S)-2-ethyl-2-hydroxy-3-oxobutanoate + NADPH + H(+). It functions in the pathway amino-acid biosynthesis; L-isoleucine biosynthesis; L-isoleucine from 2-oxobutanoate: step 2/4. Its pathway is amino-acid biosynthesis; L-valine biosynthesis; L-valine from pyruvate: step 2/4. Functionally, involved in the biosynthesis of branched-chain amino acids (BCAA). Catalyzes an alkyl-migration followed by a ketol-acid reduction of (S)-2-acetolactate (S2AL) to yield (R)-2,3-dihydroxy-isovalerate. In the isomerase reaction, S2AL is rearranged via a Mg-dependent methyl migration to produce 3-hydroxy-3-methyl-2-ketobutyrate (HMKB). In the reductase reaction, this 2-ketoacid undergoes a metal-dependent reduction by NADPH to yield (R)-2,3-dihydroxy-isovalerate. The polypeptide is Ketol-acid reductoisomerase (NADP(+)) (Klebsiella pneumoniae (strain 342)).